The sequence spans 389 residues: Coproporphyrin III ferrochelatase (389 aa).

The Fe-coproporphyrin III site is built by Ser-70 and Tyr-139. His-205 contributes to the Fe(2+) binding site. The interval 207-229 (IPSTDAGKSGPSGRPDSGEPWGE) is disordered. Glu-303 serves as a coordination point for Fe(2+).

It belongs to the ferrochelatase family.

The protein resides in the cytoplasm. It catalyses the reaction Fe-coproporphyrin III + 2 H(+) = coproporphyrin III + Fe(2+). The protein operates within porphyrin-containing compound metabolism; protoheme biosynthesis. Involved in coproporphyrin-dependent heme b biosynthesis. Catalyzes the insertion of ferrous iron into coproporphyrin III to form Fe-coproporphyrin III. The protein is Coproporphyrin III ferrochelatase of Leifsonia xyli subsp. xyli (strain CTCB07).